The sequence spans 122 residues: Large ribosomal subunit protein eL18 (122 aa).

This sequence belongs to the eukaryotic ribosomal protein eL18 family.

In Pyrobaculum aerophilum (strain ATCC 51768 / DSM 7523 / JCM 9630 / CIP 104966 / NBRC 100827 / IM2), this protein is Large ribosomal subunit protein eL18.